Here is a 221-residue protein sequence, read N- to C-terminus: Large ribosomal subunit protein uL3 (221 aa).

The interval 140 to 160 (GGPKTHGSGFHRHAGSIGMRS) is disordered.

The protein belongs to the universal ribosomal protein uL3 family. As to quaternary structure, part of the 50S ribosomal subunit. Forms a cluster with proteins L14 and L19.

Its function is as follows. One of the primary rRNA binding proteins, it binds directly near the 3'-end of the 23S rRNA, where it nucleates assembly of the 50S subunit. In Chlamydia caviae (strain ATCC VR-813 / DSM 19441 / 03DC25 / GPIC) (Chlamydophila caviae), this protein is Large ribosomal subunit protein uL3.